Consider the following 312-residue polypeptide: tRNA uridine(34) hydroxylase (312 aa).

Residues 130–225 enclose the Rhodanese domain; sequence RGDEVVFFDG…YGEQFGNKGL (96 aa). Residue C185 is the Cysteine persulfide intermediate of the active site.

This sequence belongs to the TrhO family.

The enzyme catalyses uridine(34) in tRNA + AH2 + O2 = 5-hydroxyuridine(34) in tRNA + A + H2O. Functionally, catalyzes oxygen-dependent 5-hydroxyuridine (ho5U) modification at position 34 in tRNAs. In Corynebacterium glutamicum (strain ATCC 13032 / DSM 20300 / JCM 1318 / BCRC 11384 / CCUG 27702 / LMG 3730 / NBRC 12168 / NCIMB 10025 / NRRL B-2784 / 534), this protein is tRNA uridine(34) hydroxylase.